Consider the following 122-residue polypeptide: Small ribosomal subunit protein uS13 (122 aa).

The segment at 95–122 (GLPVHGQRTHTNARTRKGPRKGAVGKKK) is disordered.

This sequence belongs to the universal ribosomal protein uS13 family. Part of the 30S ribosomal subunit. Forms a loose heterodimer with protein S19. Forms two bridges to the 50S subunit in the 70S ribosome.

Its function is as follows. Located at the top of the head of the 30S subunit, it contacts several helices of the 16S rRNA. In the 70S ribosome it contacts the 23S rRNA (bridge B1a) and protein L5 of the 50S subunit (bridge B1b), connecting the 2 subunits; these bridges are implicated in subunit movement. Contacts the tRNAs in the A and P-sites. The chain is Small ribosomal subunit protein uS13 from Lawsonia intracellularis (strain PHE/MN1-00).